A 154-amino-acid chain; its full sequence is MADVEVETEVAAGAQPKKRTFRKYSYRGVDLDALLDMSTDDLVQLFPARARRRFQRGLKRKPMALIKKLRKAKKDAPAGEKPEPVRTHLRNMIIVPEMIGSIVGVYNGKTFNQVEIKPEMIGHYLAEFSISYKPVKHGRPGIGATHSSRFIPLK.

This sequence belongs to the universal ribosomal protein uS19 family.

The polypeptide is Small ribosomal subunit protein uS19 (RPS15) (Oryza sativa subsp. japonica (Rice)).